The following is a 331-amino-acid chain: UPF0194 membrane protein YbhG (331 aa).

The N-terminal stretch at 1–19 (MKKPVVIGLAIAAIVAVIA) is a signal peptide. Residues 107 to 208 (EEIAQAAAAV…LDLQDTTLIA (102 aa)) are a coiled coil.

The protein belongs to the UPF0194 family.

The protein resides in the periplasm. This is UPF0194 membrane protein YbhG from Salmonella heidelberg (strain SL476).